The primary structure comprises 691 residues: Threonine--tRNA ligase (691 aa).

The interval 1–22 (MSVPAQPAPGADGGDPRQPIRV) is disordered. The TGS domain occupies 1–73 (MSVPAQPAPG…DADAEVTPIA (73 aa)). The segment at 268–574 (DHRKLGVELD…LTEHYAGAFP (307 aa)) is catalytic. The Zn(2+) site is built by Cys373, His424, and His551.

This sequence belongs to the class-II aminoacyl-tRNA synthetase family. In terms of assembly, homodimer. It depends on Zn(2+) as a cofactor.

The protein resides in the cytoplasm. The enzyme catalyses tRNA(Thr) + L-threonine + ATP = L-threonyl-tRNA(Thr) + AMP + diphosphate + H(+). In terms of biological role, catalyzes the attachment of threonine to tRNA(Thr) in a two-step reaction: L-threonine is first activated by ATP to form Thr-AMP and then transferred to the acceptor end of tRNA(Thr). Also edits incorrectly charged L-seryl-tRNA(Thr). The sequence is that of Threonine--tRNA ligase from Mycobacterium ulcerans (strain Agy99).